Consider the following 264-residue polypeptide: Thiazole synthase (264 aa).

Lysine 106 acts as the Schiff-base intermediate with DXP in catalysis. Residues glycine 167, 193–194 (AG), and 215–216 (NT) each bind 1-deoxy-D-xylulose 5-phosphate.

Belongs to the ThiG family. Homotetramer. Forms heterodimers with either ThiH or ThiS.

It localises to the cytoplasm. It carries out the reaction [ThiS sulfur-carrier protein]-C-terminal-Gly-aminoethanethioate + 2-iminoacetate + 1-deoxy-D-xylulose 5-phosphate = [ThiS sulfur-carrier protein]-C-terminal Gly-Gly + 2-[(2R,5Z)-2-carboxy-4-methylthiazol-5(2H)-ylidene]ethyl phosphate + 2 H2O + H(+). It participates in cofactor biosynthesis; thiamine diphosphate biosynthesis. Catalyzes the rearrangement of 1-deoxy-D-xylulose 5-phosphate (DXP) to produce the thiazole phosphate moiety of thiamine. Sulfur is provided by the thiocarboxylate moiety of the carrier protein ThiS. In vitro, sulfur can be provided by H(2)S. The protein is Thiazole synthase of Stenotrophomonas maltophilia (strain K279a).